Reading from the N-terminus, the 244-residue chain is Glutathione S-transferase theta-2 (244 aa).

The GST N-terminal domain maps to 2–82 (GLELYLDLLS…YLSSKYQVAD (81 aa)). Residues 40-41 (HM), 53-54 (KV), 66-67 (ES), and 104-107 (DNIR) each bind glutathione. One can recognise a GST C-terminal domain in the interval 88-230 (DLQARAQVHE…AKKMLPVPPP (143 aa)).

It belongs to the GST superfamily. Theta family. In terms of assembly, homodimer. In terms of tissue distribution, in liver, highest expression found in central vein limiting plate hepatocytes. Also expressed in interlobular bile duct epithelial cells. In lung, expressed in club cells and ciliated cells of the bronchiolar epithelium and in type II alveolar cells of the lung parenchyma.

It localises to the cytoplasm. The protein resides in the cytosol. The protein localises to the nucleus. It catalyses the reaction RX + glutathione = an S-substituted glutathione + a halide anion + H(+). Conjugation of reduced glutathione to a wide number of exogenous and endogenous hydrophobic electrophiles. In Mus musculus (Mouse), this protein is Glutathione S-transferase theta-2.